A 219-amino-acid chain; its full sequence is Orotate phosphoribosyltransferase (219 aa).

Lys-26 contacts 5-phospho-alpha-D-ribose 1-diphosphate. Position 34 to 35 (34 to 35 (FF)) interacts with orotate. Residues 72 to 73 (YK), Arg-98, Lys-99, Lys-102, His-104, and 124 to 132 (DDVITAGTA) each bind 5-phospho-alpha-D-ribose 1-diphosphate. 2 residues coordinate orotate: Thr-128 and Arg-156.

Belongs to the purine/pyrimidine phosphoribosyltransferase family. PyrE subfamily. Homodimer. The cofactor is Mg(2+).

It carries out the reaction orotidine 5'-phosphate + diphosphate = orotate + 5-phospho-alpha-D-ribose 1-diphosphate. The protein operates within pyrimidine metabolism; UMP biosynthesis via de novo pathway; UMP from orotate: step 1/2. In terms of biological role, catalyzes the transfer of a ribosyl phosphate group from 5-phosphoribose 1-diphosphate to orotate, leading to the formation of orotidine monophosphate (OMP). The protein is Orotate phosphoribosyltransferase of Xanthomonas oryzae pv. oryzae (strain MAFF 311018).